Reading from the N-terminus, the 142-residue chain is Large ribosomal subunit protein uL13 (142 aa).

This sequence belongs to the universal ribosomal protein uL13 family. As to quaternary structure, part of the 50S ribosomal subunit.

Its function is as follows. This protein is one of the early assembly proteins of the 50S ribosomal subunit, although it is not seen to bind rRNA by itself. It is important during the early stages of 50S assembly. This chain is Large ribosomal subunit protein uL13, found in Alteromonas mediterranea (strain DSM 17117 / CIP 110805 / LMG 28347 / Deep ecotype).